The sequence spans 251 residues: Probable phosphatase Sputw3181_2734 (251 aa).

Zn(2+) contacts are provided by histidine 8, histidine 10, histidine 16, histidine 41, glutamate 74, histidine 102, histidine 132, aspartate 193, and histidine 195.

The protein belongs to the PHP family. It depends on Zn(2+) as a cofactor.

In Shewanella sp. (strain W3-18-1), this protein is Probable phosphatase Sputw3181_2734.